A 109-amino-acid polypeptide reads, in one-letter code: Putative ankyrin repeat protein L482 (109 aa).

4 ANK repeats span residues 1–26 (YLTEISGKGHIEIVKCLVNLGANITT), 27–56 (NNNYAIIQASEKGHLEVVKYLVGQNANIRS), 57–86 (ENNLAVRLASGNGHLEVVEYLVNLGADIRS), and 88–109 (NNYAIQSASQNGHLEVIEYLVA).

The chain is Putative ankyrin repeat protein L482 from Acanthamoeba polyphaga (Amoeba).